Reading from the N-terminus, the 471-residue chain is MLTERVSKYIKKQGLVSAGDEILLAVSGGPDSVCMLYIMHKLSREMGFSLRLAHLNHGLRAEESDRDAAYVTELASALGLPLCQQKVSVKAYQAEHHLSLEEAAREMRYAFLCRTAAEFGSAAVAVGHTLDDNIETVMLHLVRGSGTRGLQGLRPVLNRTIAGAGCLRVIRPLLCLGRAETQVYCREAGLLPRQDITNLSTEPLRNRIRLEVLPLLKTINPAFEETILRTAFIAGEEMALLDEVTSQMKAELVIRQDDVLMIEKIEMQRLHPALKRNLLRQMMEELLGGLKDIEARHIENIVQTMDKPAGRRIDLPYKLVFQVDYEHYLLGWGIDELCPYPPCQGEYRLGVGTETFLDGWVVKTEILPSPIGLDLSESSLVAYLDMDKAGTDLIVRTRAEGDQFQPLGMEDAKSLKEFMIDNKIPRNWRARVPLLISSKEILWLVGYRIGESAKVDENTRRVLRVEFRLLG.

27–32 (SGGPDS) contacts ATP.

It belongs to the tRNA(Ile)-lysidine synthase family.

It localises to the cytoplasm. It catalyses the reaction cytidine(34) in tRNA(Ile2) + L-lysine + ATP = lysidine(34) in tRNA(Ile2) + AMP + diphosphate + H(+). Functionally, ligates lysine onto the cytidine present at position 34 of the AUA codon-specific tRNA(Ile) that contains the anticodon CAU, in an ATP-dependent manner. Cytidine is converted to lysidine, thus changing the amino acid specificity of the tRNA from methionine to isoleucine. This chain is tRNA(Ile)-lysidine synthase, found in Dehalococcoides mccartyi (strain CBDB1).